The primary structure comprises 136 residues: NADPH-dependent 7-cyano-7-deazaguanine reductase (136 aa).

The active-site Thioimide intermediate is the Cys53. The active-site Proton donor is Asp60. Substrate contacts are provided by residues 75–77 and 94–95; these read VEL and HE.

It belongs to the GTP cyclohydrolase I family. QueF type 1 subfamily.

The protein localises to the cytoplasm. It catalyses the reaction 7-aminomethyl-7-carbaguanine + 2 NADP(+) = 7-cyano-7-deazaguanine + 2 NADPH + 3 H(+). It functions in the pathway tRNA modification; tRNA-queuosine biosynthesis. Functionally, catalyzes the NADPH-dependent reduction of 7-cyano-7-deazaguanine (preQ0) to 7-aminomethyl-7-deazaguanine (preQ1). The protein is NADPH-dependent 7-cyano-7-deazaguanine reductase of Nostoc sp. (strain PCC 7120 / SAG 25.82 / UTEX 2576).